Reading from the N-terminus, the 372-residue chain is Adaptive-response sensory-kinase SasA (372 aa).

In terms of domain architecture, Histidine kinase spans 147–360 (MVAHELRTPL…CFHFTVPVWQ (214 aa)). H150 carries the post-translational modification Phosphohistidine; by autocatalysis.

As to quaternary structure, homooligomerizes. Interacts with KaiC. Participates in the KaiBC complex, whose core is composed of a KaiC homohexamer and 6 KaiB.

The catalysed reaction is ATP + protein L-histidine = ADP + protein N-phospho-L-histidine.. Functionally, member of the two-component regulatory system SasA/RpaA involved in genome-wide circadian gene expression. One of several clock output pathways. Participates in the Kai clock protein complex, the main circadian regulator in cyanobacteria, via its interaction with KaiC. KaiC enhances the autophosphorylation activity of SasA, which then transfers its phosphate group to RpaA to activate it. In addition to its output function, recruits fold-shifted KaiB (KaiB(fs)) to KaiC to cooperatively form the KaiB(6):KaiC(6) complex (independent of SasA kinase activity). Required for robustness of the circadian rhythm of gene expression and is involved in clock output, also required for adaptation to light/dark cycles. This Prochlorococcus marinus subsp. pastoris (strain CCMP1986 / NIES-2087 / MED4) protein is Adaptive-response sensory-kinase SasA.